The sequence spans 554 residues: Glypican-1 (554 aa).

The signal sequence occupies residues M1–A21. 7 cysteine pairs are disulfide-bonded: C32–C68, C62–C256, C69–C259, C191–C343, C246–C279, C268–C415, and C272–C401. 2 N-linked (GlcNAc...) asparagine glycosylation sites follow: N79 and N116. Positions P346–K369 are disordered. Residues S353–K369 are compositionally biased toward basic and acidic residues. S486, S488, and S490 each carry an O-linked (Xyl...) (heparan sulfate) serine glycan.

Belongs to the glypican family. O-glycosylated with heparan sulfate side chains.

The protein resides in the cell membrane. The protein localises to the secreted. It localises to the extracellular space. Cell surface proteoglycan that bears heparan sulfate. In Xenopus tropicalis (Western clawed frog), this protein is Glypican-1 (gpc1).